The primary structure comprises 284 residues: Diaminopimelate epimerase (284 aa).

Substrate is bound by residues asparagine 14 and asparagine 67. Cysteine 76 functions as the Proton donor in the catalytic mechanism. Substrate contacts are provided by residues 77–78 (GN), asparagine 166, asparagine 199, and 217–218 (ER). Cysteine 226 acts as the Proton acceptor in catalysis. 227–228 (GT) is a binding site for substrate.

It belongs to the diaminopimelate epimerase family. As to quaternary structure, homodimer.

It is found in the cytoplasm. It carries out the reaction (2S,6S)-2,6-diaminopimelate = meso-2,6-diaminopimelate. The protein operates within amino-acid biosynthesis; L-lysine biosynthesis via DAP pathway; DL-2,6-diaminopimelate from LL-2,6-diaminopimelate: step 1/1. Catalyzes the stereoinversion of LL-2,6-diaminopimelate (L,L-DAP) to meso-diaminopimelate (meso-DAP), a precursor of L-lysine and an essential component of the bacterial peptidoglycan. This is Diaminopimelate epimerase from Geobacillus sp. (strain WCH70).